The sequence spans 884 residues: Chondroitin sulfate synthase 3 (884 aa).

The Cytoplasmic portion of the chain corresponds to 1-7 (MAVRSRR). The helical; Signal-anchor for type II membrane protein transmembrane segment at 8 to 28 (PWVSVALGLVLGFTAASWLIA) threads the bilayer. Residues 29–884 (PRVAELSEKR…LGVRDNRTLS (856 aa)) lie on the Lumenal side of the membrane. A disordered region spans residues 47-164 (YYGRSATGPR…NGSGDGGAAV (118 aa)). 2 stretches are compositionally biased toward low complexity: residues 60 to 69 (QQLLPQPQSR) and 84 to 96 (PGPQQPEAAPGGP). 2 N-linked (GlcNAc...) asparagine glycosylation sites follow: Asn-155 and Asn-281. A disordered region spans residues 437–456 (SNSEVSKEDQQLGRTPSFNH). Asn-712 carries N-linked (GlcNAc...) asparagine glycosylation. Asp-722 and His-836 together coordinate a divalent metal cation. Asn-880 is a glycosylation site (N-linked (GlcNAc...) asparagine).

It belongs to the chondroitin N-acetylgalactosaminyltransferase family. Co(2+) serves as cofactor. The cofactor is Mn(2+). Requires Cd(2+) as cofactor.

The protein resides in the golgi apparatus. Its subcellular location is the golgi stack membrane. It carries out the reaction 3-O-(beta-D-GlcA-(1-&gt;3)-beta-D-GalNAc-(1-&gt;4)-beta-D-GlcA-(1-&gt;3)-beta-D-Gal-(1-&gt;3)-beta-D-Gal-(1-&gt;4)-beta-D-Xyl)-L-seryl-[protein] + UDP-N-acetyl-alpha-D-galactosamine = 3-O-(beta-D-GalNAc-(1-&gt;4)-beta-D-GlcA-(1-&gt;3)-beta-D-GalNAc-(1-&gt;4)-beta-D-GlcA-(1-&gt;3)-beta-D-Gal-(1-&gt;3)-beta-D-Gal-(1-&gt;4)-beta-D-Xyl)-L-seryl-[protein] + UDP + H(+). It catalyses the reaction 3-O-{beta-D-GlcA-(1-&gt;3)-[beta-D-GalNAc-(1-&gt;4)-beta-D-GlcA-(1-&gt;3)](n)-beta-D-GalNAc-(1-&gt;4)-beta-D-GlcA-(1-&gt;3)-beta-D-Gal-(1-&gt;3)-beta-D-Gal-(1-&gt;4)-beta-D-Xyl}-L-seryl-[protein] + UDP-N-acetyl-alpha-D-galactosamine = 3-O-{[beta-D-GalNAc-(1-&gt;4)-beta-D-GlcA-(1-&gt;3)](n+1)-beta-D-GalNAc-(1-&gt;4)-beta-D-GlcA-(1-&gt;3)-beta-D-Gal-(1-&gt;3)-beta-D-Gal-(1-&gt;4)-beta-D-Xyl}-L-seryl-[protein] + UDP + H(+). The enzyme catalyses 3-O-(beta-D-GalNAc-(1-&gt;4)-beta-D-GlcA-(1-&gt;3)-beta-D-Gal-(1-&gt;3)-beta-D-Gal-(1-&gt;4)-beta-D-Xyl)-L-seryl-[protein] + UDP-alpha-D-glucuronate = 3-O-(beta-D-GlcA-(1-&gt;3)-beta-D-GalNAc-(1-&gt;4)-beta-D-GlcA-(1-&gt;3)-beta-D-Gal-(1-&gt;3)-beta-D-Gal-(1-&gt;4)-beta-D-Xyl)-L-seryl-[protein] + UDP + H(+). The catalysed reaction is 3-O-{[beta-D-GalNAc-(1-&gt;4)-beta-D-GlcA-(1-&gt;3)](n)-beta-D-GalNAc-(1-&gt;4)-beta-D-GlcA-(1-&gt;3)-beta-D-Gal-(1-&gt;3)-beta-D-Gal-(1-&gt;4)-beta-D-Xyl}-L-seryl-[protein] + UDP-alpha-D-glucuronate = 3-O-{beta-D-GlcA-(1-&gt;3)-[beta-D-GalNAc-(1-&gt;4)-beta-D-GlcA-(1-&gt;3)](n)-beta-D-GalNAc-(1-&gt;4)-beta-D-GlcA-(1-&gt;3)-beta-D-Gal-(1-&gt;3)-beta-D-Gal-(1-&gt;4)-beta-D-Xyl}-L-seryl-[protein] + UDP + H(+). Has both beta-1,3-glucuronic acid and beta-1,4-N-acetylgalactosamine transferase activity. Transfers glucuronic acid (GlcUA) from UDP-GlcUA and N-acetylgalactosamine (GalNAc) from UDP-GalNAc to the non-reducing end of the elongating chondroitin polymer. Specific activity is much reduced compared to CHSY1. In Mus musculus (Mouse), this protein is Chondroitin sulfate synthase 3 (Chsy3).